A 329-amino-acid polypeptide reads, in one-letter code: GTP 3',8-cyclase 1 (329 aa).

The Radical SAM core domain maps to 7-230 (GQGRQIDYLR…LDSAEQSGGP (224 aa)). Residue Arg16 participates in GTP binding. 2 residues coordinate [4Fe-4S] cluster: Cys23 and Cys27. Tyr29 serves as a coordination point for S-adenosyl-L-methionine. Cys30 provides a ligand contact to [4Fe-4S] cluster. Residue Arg65 participates in GTP binding. Gly69 provides a ligand contact to S-adenosyl-L-methionine. Thr96 contacts GTP. Residue Ser120 participates in S-adenosyl-L-methionine binding. Residue Lys157 participates in GTP binding. Met191 provides a ligand contact to S-adenosyl-L-methionine. [4Fe-4S] cluster is bound by residues Cys255 and Cys258. 260 to 262 (RLR) is a GTP binding site. Cys272 serves as a coordination point for [4Fe-4S] cluster.

This sequence belongs to the radical SAM superfamily. MoaA family. In terms of assembly, monomer and homodimer. [4Fe-4S] cluster is required as a cofactor.

The enzyme catalyses GTP + AH2 + S-adenosyl-L-methionine = (8S)-3',8-cyclo-7,8-dihydroguanosine 5'-triphosphate + 5'-deoxyadenosine + L-methionine + A + H(+). The protein operates within cofactor biosynthesis; molybdopterin biosynthesis. Its function is as follows. Catalyzes the cyclization of GTP to (8S)-3',8-cyclo-7,8-dihydroguanosine 5'-triphosphate. The protein is GTP 3',8-cyclase 1 (moaA1) of Pseudomonas aeruginosa (strain ATCC 15692 / DSM 22644 / CIP 104116 / JCM 14847 / LMG 12228 / 1C / PRS 101 / PAO1).